The chain runs to 222 residues: Phosphate-specific transport system accessory protein PhoU homolog 1 (222 aa).

It belongs to the PhoU family. In terms of assembly, homodimer.

Its subcellular location is the cytoplasm. Its function is as follows. Plays a role in the regulation of phosphate uptake. This chain is Phosphate-specific transport system accessory protein PhoU homolog 1 (phoU1), found in Mycobacterium leprae (strain TN).